The following is a 312-amino-acid chain: Serine/threonine-protein phosphatase PP1 isozyme 5 (312 aa).

Position 2 is an N-acetylalanine (Ala2). Mn(2+)-binding residues include Asp70, His72, Asp98, and Asn130. The Proton donor role is filled by His131. Positions 179 and 254 each coordinate Mn(2+).

The protein belongs to the PPP phosphatase family. PP-1 subfamily. Mn(2+) is required as a cofactor.

The protein resides in the nucleus. Its subcellular location is the cytoplasm. The catalysed reaction is O-phospho-L-seryl-[protein] + H2O = L-seryl-[protein] + phosphate. It carries out the reaction O-phospho-L-threonyl-[protein] + H2O = L-threonyl-[protein] + phosphate. Its activity is regulated as follows. Phosphatase activity is strongly reduced by the protein phosphatase inhibitor 2 (I-2). Serine/threonine-protein phosphatase that possesses phosphatase activity toward para-nitrophenyl phosphate (pNPP) in vitro. This chain is Serine/threonine-protein phosphatase PP1 isozyme 5, found in Arabidopsis thaliana (Mouse-ear cress).